The following is a 184-amino-acid chain: HVA22-like protein c (184 aa).

The next 3 membrane-spanning stretches (helical) occupy residues 13-33 (VLIK…YPLY), 51-71 (LTYW…SKPL), and 73-93 (WFPI…LPQF).

The protein belongs to the DP1 family. As to expression, predominantly expressed in flower buds and stem.

It is found in the membrane. The chain is HVA22-like protein c (HVA22C) from Arabidopsis thaliana (Mouse-ear cress).